The sequence spans 248 residues: L-seryl-tRNA(Sec) kinase (248 aa).

An ATP-binding site is contributed by 7–14; that stretch reads GLPGVGKS.

This sequence belongs to the L-seryl-tRNA(Sec) kinase family.

It catalyses the reaction L-seryl-tRNA(Sec) + ATP = O-phospho-L-seryl-tRNA(Sec) + ADP. It participates in aminoacyl-tRNA biosynthesis; selenocysteinyl-tRNA(Sec) biosynthesis; selenocysteinyl-tRNA(Sec) from L-seryl-tRNA(Sec) (archaeal/eukaryal route): step 1/2. Specifically phosphorylates seryl-tRNA(Sec) to O-phosphoseryl-tRNA(Sec), an activated intermediate for selenocysteine biosynthesis. The polypeptide is L-seryl-tRNA(Sec) kinase (pstK) (Methanocaldococcus jannaschii (strain ATCC 43067 / DSM 2661 / JAL-1 / JCM 10045 / NBRC 100440) (Methanococcus jannaschii)).